We begin with the raw amino-acid sequence, 193 residues long: Ribonuclease HII (193 aa).

Positions 15–193 (YIVAGIDEAG…PYHRRSFKCC (179 aa)) constitute an RNase H type-2 domain. The a divalent metal cation site is built by aspartate 21, glutamate 22, and aspartate 112.

The protein belongs to the RNase HII family. Mn(2+) is required as a cofactor. The cofactor is Mg(2+).

Its subcellular location is the cytoplasm. The catalysed reaction is Endonucleolytic cleavage to 5'-phosphomonoester.. Endonuclease that specifically degrades the RNA of RNA-DNA hybrids. This chain is Ribonuclease HII, found in Rickettsia felis (strain ATCC VR-1525 / URRWXCal2) (Rickettsia azadi).